A 332-amino-acid chain; its full sequence is Biotin synthase (332 aa).

The Radical SAM core domain maps to 46–275 (SDIQRASLLS…RARVRLSAGR (230 aa)). Residues Cys-61, Cys-65, and Cys-68 each coordinate [4Fe-4S] cluster. Residues Cys-106, Cys-138, Cys-198, and Arg-270 each contribute to the [2Fe-2S] cluster site.

It belongs to the radical SAM superfamily. Biotin synthase family. As to quaternary structure, homodimer. [4Fe-4S] cluster serves as cofactor. It depends on [2Fe-2S] cluster as a cofactor.

The enzyme catalyses (4R,5S)-dethiobiotin + (sulfur carrier)-SH + 2 reduced [2Fe-2S]-[ferredoxin] + 2 S-adenosyl-L-methionine = (sulfur carrier)-H + biotin + 2 5'-deoxyadenosine + 2 L-methionine + 2 oxidized [2Fe-2S]-[ferredoxin]. Its pathway is cofactor biosynthesis; biotin biosynthesis; biotin from 7,8-diaminononanoate: step 2/2. Functionally, catalyzes the conversion of dethiobiotin (DTB) to biotin by the insertion of a sulfur atom into dethiobiotin via a radical-based mechanism. This Methylobacterium sp. (strain 4-46) protein is Biotin synthase.